The following is a 71-amino-acid chain: Protein KleB (71 aa).

Positions 9 to 28 (IETCCRRCGKSIRTLSHTII) form a DNA-binding region, H-T-H motif.

This Escherichia coli protein is Protein KleB (kleB).